The following is a 74-amino-acid chain: Large ribosomal subunit protein uL29 (74 aa).

The protein belongs to the universal ribosomal protein uL29 family.

In Nostoc sp. (strain PCC 7120 / SAG 25.82 / UTEX 2576), this protein is Large ribosomal subunit protein uL29.